A 62-amino-acid chain; its full sequence is Photosystem II reaction center protein Z (62 aa).

The next 2 helical transmembrane spans lie at 8–28 and 41–61; these read AVFA…AVFA and FSGA…NSSV.

Belongs to the PsbZ family. As to quaternary structure, PSII is composed of 1 copy each of membrane proteins PsbA, PsbB, PsbC, PsbD, PsbE, PsbF, PsbH, PsbI, PsbJ, PsbK, PsbL, PsbM, PsbT, PsbY, PsbZ, Psb30/Ycf12, at least 3 peripheral proteins of the oxygen-evolving complex and a large number of cofactors. It forms dimeric complexes.

The protein resides in the plastid. It is found in the chloroplast thylakoid membrane. In terms of biological role, may control the interaction of photosystem II (PSII) cores with the light-harvesting antenna, regulates electron flow through the 2 photosystem reaction centers. PSII is a light-driven water plastoquinone oxidoreductase, using light energy to abstract electrons from H(2)O, generating a proton gradient subsequently used for ATP formation. This is Photosystem II reaction center protein Z from Selaginella uncinata (Blue spike-moss).